Reading from the N-terminus, the 80-residue chain is Acyl carrier protein (80 aa).

The region spanning 1–79 is the Carrier domain; it reads MSQEEILQKV…DAVKFIEAKK (79 aa). S39 bears the O-(pantetheine 4'-phosphoryl)serine mark.

The protein belongs to the acyl carrier protein (ACP) family. In terms of processing, 4'-phosphopantetheine is transferred from CoA to a specific serine of apo-ACP by AcpS. This modification is essential for activity because fatty acids are bound in thioester linkage to the sulfhydryl of the prosthetic group.

Its subcellular location is the cytoplasm. It functions in the pathway lipid metabolism; fatty acid biosynthesis. Functionally, carrier of the growing fatty acid chain in fatty acid biosynthesis. The sequence is that of Acyl carrier protein from Prochlorococcus marinus (strain MIT 9515).